A 126-amino-acid polypeptide reads, in one-letter code: Pancreatic polypeptide prohormone (126 aa).

The first 26 residues, 1-26 (MTATRCCLWLLLLGTCMALLLPEAWG), serve as a signal peptide directing secretion. Position 62 is a tyrosine amide (tyrosine 62). The disordered stretch occupies residues 77–126 (RQSHAAAPGGSHRHPPAGLPAAKGGTGVSGSPPKPWDCLPCRAHSLPSQS).

It belongs to the NPY family. No icosapeptide-like peptide is cleaved from the C-terminal.

The protein resides in the secreted. Hormone secreted by pancreatic cells that acts as a regulator of pancreatic and gastrointestinal functions probably by signaling through the G protein-coupled receptor NPY4R2. The sequence is that of Pancreatic polypeptide prohormone (PPY) from Cavia porcellus (Guinea pig).